A 258-amino-acid polypeptide reads, in one-letter code: Small ribosomal subunit protein uS2 (258 aa).

The protein belongs to the universal ribosomal protein uS2 family.

In Granulibacter bethesdensis (strain ATCC BAA-1260 / CGDNIH1), this protein is Small ribosomal subunit protein uS2.